The chain runs to 427 residues: MESLTLQPIARVDGTINLPGSKSVSNRALLLAALAHGKTVLTNLLDSDDVRHMLNALTALGVSYTLSADRTRCEIIGNGGPLHAKSALELFLGNAGTAMRPLAAALCLGSNDIVLTGEPRMKERPIGHLVDALRLGGAKITYLEQENYPPLRLQGGFTGGNVDVDGSVSSQFLTALLMTAPLAPEDTVIRIKGDLVSKPYIDITLNLMKTFGVEIENQHYQQFVVKGGQSYQSPGTYLVEGDASSASYFLAAAAIKGGTVKVTGIGRNSMQGDIRFADVLEKMGATICWGDDYISCMRGELNAIDMDMNHIPDAAMTIATAALFAKGTTTLRNIYNWRVKETDRLFAMATELRKVGAEVEEGHDFIRITPPEKLKFAEIATYNDHRMAMCFSLVALSDTAVTILDPKCTAKTFPDYFEQLARISQSG.

3 residues coordinate 3-phosphoshikimate: Lys22, Ser23, and Arg27. Residue Lys22 participates in phosphoenolpyruvate binding. Positions 96 and 124 each coordinate phosphoenolpyruvate. Ser169, Ser170, Gln171, Ser197, Asp313, Asn336, and Lys340 together coordinate 3-phosphoshikimate. Gln171 contacts phosphoenolpyruvate. The active-site Proton acceptor is the Asp313. 3 residues coordinate phosphoenolpyruvate: Arg344, Arg386, and Lys411.

Belongs to the EPSP synthase family. Monomer.

The protein resides in the cytoplasm. It catalyses the reaction 3-phosphoshikimate + phosphoenolpyruvate = 5-O-(1-carboxyvinyl)-3-phosphoshikimate + phosphate. It functions in the pathway metabolic intermediate biosynthesis; chorismate biosynthesis; chorismate from D-erythrose 4-phosphate and phosphoenolpyruvate: step 6/7. Catalyzes the transfer of the enolpyruvyl moiety of phosphoenolpyruvate (PEP) to the 5-hydroxyl of shikimate-3-phosphate (S3P) to produce enolpyruvyl shikimate-3-phosphate and inorganic phosphate. The chain is 3-phosphoshikimate 1-carboxyvinyltransferase from Escherichia coli O127:H6 (strain E2348/69 / EPEC).